Consider the following 877-residue polypeptide: Alanine--tRNA ligase (877 aa).

Positions 562, 566, 664, and 668 each coordinate Zn(2+).

This sequence belongs to the class-II aminoacyl-tRNA synthetase family. It depends on Zn(2+) as a cofactor.

The protein localises to the cytoplasm. It catalyses the reaction tRNA(Ala) + L-alanine + ATP = L-alanyl-tRNA(Ala) + AMP + diphosphate. Functionally, catalyzes the attachment of alanine to tRNA(Ala) in a two-step reaction: alanine is first activated by ATP to form Ala-AMP and then transferred to the acceptor end of tRNA(Ala). Also edits incorrectly charged Ser-tRNA(Ala) and Gly-tRNA(Ala) via its editing domain. The protein is Alanine--tRNA ligase of Picosynechococcus sp. (strain ATCC 27264 / PCC 7002 / PR-6) (Agmenellum quadruplicatum).